A 599-amino-acid chain; its full sequence is UvrABC system protein C (599 aa).

The region spanning 15–93 is the GIY-YIG domain; sequence EKPGCYQYFD…IKEYQPRYNV (79 aa). The 36-residue stretch at 207–242 folds into the UVR domain; the sequence is HRLVRMYRDRMQVYSEGLRFEEAQICKERIELLERY.

It belongs to the UvrC family. As to quaternary structure, interacts with UvrB in an incision complex.

It is found in the cytoplasm. Its function is as follows. The UvrABC repair system catalyzes the recognition and processing of DNA lesions. UvrC both incises the 5' and 3' sides of the lesion. The N-terminal half is responsible for the 3' incision and the C-terminal half is responsible for the 5' incision. The polypeptide is UvrABC system protein C (Porphyromonas gingivalis (strain ATCC BAA-308 / W83)).